A 364-amino-acid chain; its full sequence is Aminomethyltransferase (364 aa).

It belongs to the GcvT family. As to quaternary structure, the glycine cleavage system is composed of four proteins: P, T, L and H.

The catalysed reaction is N(6)-[(R)-S(8)-aminomethyldihydrolipoyl]-L-lysyl-[protein] + (6S)-5,6,7,8-tetrahydrofolate = N(6)-[(R)-dihydrolipoyl]-L-lysyl-[protein] + (6R)-5,10-methylene-5,6,7,8-tetrahydrofolate + NH4(+). Functionally, the glycine cleavage system catalyzes the degradation of glycine. The chain is Aminomethyltransferase from Geobacillus sp. (strain WCH70).